Here is a 460-residue protein sequence, read N- to C-terminus: 25S rRNA (cytosine-C(5))-methyltransferase rcm1 (460 aa).

Residues 223–229 (CAAPGNK), glutamate 246, aspartate 273, and aspartate 293 contribute to the S-adenosyl-L-methionine site. Residue cysteine 350 is the Nucleophile of the active site. Residues 430-439 (KMYKNDDDTK) show a composition bias toward basic and acidic residues. The segment at 430–460 (KMYKNDDDTKKRKRKKKKKEVKKKARIQGEE) is disordered. Residues 440–460 (KRKRKKKKKEVKKKARIQGEE) show a composition bias toward basic residues.

It belongs to the class I-like SAM-binding methyltransferase superfamily. RsmB/NOP family. Interacts with trm112.

It localises to the nucleus. The protein resides in the nucleolus. The enzyme catalyses a cytidine in 25S rRNA + S-adenosyl-L-methionine = a 5-methylcytidine in 25S rRNA + S-adenosyl-L-homocysteine + H(+). In terms of biological role, S-adenosyl-L-methionine-dependent methyltransferase that specifically methylates the C(5) position of a cytosine in 25S rRNA. In Schizosaccharomyces pombe (strain 972 / ATCC 24843) (Fission yeast), this protein is 25S rRNA (cytosine-C(5))-methyltransferase rcm1 (rcm1).